The primary structure comprises 614 residues: Sodium- and chloride-dependent betaine transporter (614 aa).

The Cytoplasmic portion of the chain corresponds to 1 to 44 (MDRKVAVHEDGYPVVSWVPEEGEMMDQKGKDQVKDRGQWTNKME). 3 helical membrane passes run 45 to 65 (FVLS…FPYL), 73 to 92 (AFFI…VFFL), and 117 to 137 (GIGM…IIIL). Topologically, residues 138 to 210 (AWALFYLFSS…SGIHDLGSLR (73 aa)) are extracellular. An intrachain disulfide couples Cys157 to Cys166. Residues Asn171 and Asn183 are each glycosylated (N-linked (GlcNAc...) asparagine). The next 9 helical transmembrane spans lie at 211–229 (WELA…FCIW), 238–255 (VVYF…ILLI), 291–308 (IFFS…LGSY), 320–341 (IALC…FSIL), 374–393 (MPLS…FLGL), 423–441 (VLIL…LLVT), 458–478 (GICL…VYGA), 499–518 (ISWL…FSLS), and 538–556 (IGWL…FIII). Over 557–614 (TFLKTQGSFKKRLRRLITPDPSLPQPGRRPPQDGSSAQNCSSSPAKQELIAWEKETHL) the chain is Cytoplasmic. Residues 574–602 (TPDPSLPQPGRRPPQDGSSAQNCSSSPAK) form a disordered region. Residues 589–601 (DGSSAQNCSSSPA) are compositionally biased toward polar residues.

This sequence belongs to the sodium:neurotransmitter symporter (SNF) (TC 2.A.22) family. SLC6A12 subfamily. Interacts with LIN7C. As to expression, predominantly expressed in the liver (sinusoidal hepatocyte plasma membranes), also present in the renal medulla, where it localizes to the basolateral membranes of collecting ducts (particularly at the papilla tip) and the thick ascending limbs of Henle (at protein level). Some expression is detected in the leptomeninges, but no expression is detected in brain parenchyma, brain blood vessels, ependymal cells, the renal cortex and the intestine.

The protein resides in the basolateral cell membrane. It is found in the cell membrane. It carries out the reaction 4-aminobutanoate(out) + chloride(out) + 3 Na(+)(out) = 4-aminobutanoate(in) + chloride(in) + 3 Na(+)(in). The enzyme catalyses glycine betaine(out) + 2 chloride(out) + 3 Na(+)(out) = glycine betaine(in) + 2 chloride(in) + 3 Na(+)(in). Transporter that mediates cellular uptake of betaine and GABA in a sodium- and chloride-dependent process. May have a role in regulation of GABAergic transmission in the brain through the reuptake of GABA into presynaptic terminals, as well as in osmotic regulation. Probably also involved in renal and hepatic osmotic regulation. This is Sodium- and chloride-dependent betaine transporter (Slc6a12) from Mus musculus (Mouse).